Reading from the N-terminus, the 419-residue chain is L-rhamnose isomerase (419 aa).

3 residues coordinate Mn(2+): H262, D294, and D296.

It belongs to the rhamnose isomerase family. In terms of assembly, homotetramer. Mn(2+) is required as a cofactor.

It is found in the cytoplasm. It carries out the reaction L-rhamnopyranose = L-rhamnulose. The protein operates within carbohydrate degradation; L-rhamnose degradation; glycerone phosphate from L-rhamnose: step 1/3. Functionally, catalyzes the interconversion of L-rhamnose and L-rhamnulose. The chain is L-rhamnose isomerase from Salmonella paratyphi A (strain AKU_12601).